The sequence spans 308 residues: Ribosomal RNA small subunit methyltransferase H (308 aa).

Residues 33 to 35, D52, Y81, D99, and Q106 each bind S-adenosyl-L-methionine; that span reads GGH.

The protein belongs to the methyltransferase superfamily. RsmH family.

The protein localises to the cytoplasm. The catalysed reaction is cytidine(1402) in 16S rRNA + S-adenosyl-L-methionine = N(4)-methylcytidine(1402) in 16S rRNA + S-adenosyl-L-homocysteine + H(+). Specifically methylates the N4 position of cytidine in position 1402 (C1402) of 16S rRNA. The protein is Ribosomal RNA small subunit methyltransferase H of Francisella philomiragia subsp. philomiragia (strain ATCC 25017 / CCUG 19701 / FSC 153 / O#319-036).